Here is a 447-residue protein sequence, read N- to C-terminus: Dihydroorotase (447 aa).

Histidine 84 and histidine 86 together coordinate Zn(2+). Residues 86–88 (HLR) and asparagine 118 contribute to the substrate site. Residues aspartate 174, histidine 201, and histidine 255 each contribute to the Zn(2+) site. Asparagine 301 contributes to the substrate binding site. A Zn(2+)-binding site is contributed by aspartate 328. Aspartate 328 is an active-site residue. Substrate is bound by residues histidine 332 and 346-347 (FG).

It belongs to the metallo-dependent hydrolases superfamily. DHOase family. Class I DHOase subfamily. Zn(2+) serves as cofactor.

The catalysed reaction is (S)-dihydroorotate + H2O = N-carbamoyl-L-aspartate + H(+). It functions in the pathway pyrimidine metabolism; UMP biosynthesis via de novo pathway; (S)-dihydroorotate from bicarbonate: step 3/3. Functionally, catalyzes the reversible cyclization of carbamoyl aspartate to dihydroorotate. The polypeptide is Dihydroorotase (Anaplasma phagocytophilum (strain HZ)).